The following is a 166-amino-acid chain: P2Y purinoceptor 2 (166 aa).

Residues valine 1–arginine 24 lie on the Cytoplasmic side of the membrane. Residues valine 25 to threonine 45 form a helical membrane-spanning segment. The Extracellular portion of the chain corresponds to threonine 46–serine 72. Residues valine 73–methionine 93 form a helical membrane-spanning segment. The Cytoplasmic portion of the chain corresponds to alanine 94–serine 115. Residues valine 116–threonine 136 form a helical membrane-spanning segment. The Extracellular segment spans residues arginine 137 to alanine 159. A helical transmembrane segment spans residues tyrosine 160–leucine 166.

This sequence belongs to the G-protein coupled receptor 1 family.

The protein resides in the cell membrane. In terms of biological role, receptor for ATP and UTP coupled to G-proteins that activate a phosphatidylinositol-calcium second messenger system. This is P2Y purinoceptor 2 (P2RY2) from Cricetulus griseus (Chinese hamster).